We begin with the raw amino-acid sequence, 272 residues long: Isoprenyl transferase (272 aa).

D32 is a catalytic residue. D32 serves as a coordination point for Mg(2+). Substrate is bound by residues 33 to 36 (GNGR), W37, R45, H49, and 77 to 79 (STE). The Proton acceptor role is filled by N80. Substrate-binding positions include W81, R83, R200, and 206–208 (RIS). Residue E219 coordinates Mg(2+).

The protein belongs to the UPP synthase family. As to quaternary structure, homodimer. Requires Mg(2+) as cofactor.

Catalyzes the condensation of isopentenyl diphosphate (IPP) with allylic pyrophosphates generating different type of terpenoids. The polypeptide is Isoprenyl transferase (Prochlorococcus marinus subsp. pastoris (strain CCMP1986 / NIES-2087 / MED4)).